Consider the following 1370-residue polypeptide: Putative Polycomb group protein ASXL2 (1370 aa).

The HTH HARE-type domain maps to 11-86; sequence RTWAEAAKTV…RMGVYTLKKD (76 aa). The interval 92–216 is disordered; sequence KELSECSEES…DSVPAKPGQM (125 aa). Residues 103 to 120 are compositionally biased toward low complexity; the sequence is DGQSDSHSSDNSSSSDGG. Positions 141–152 are enriched in pro residues; that stretch reads PPSPPSGCPSPT. Serine 150 bears the Phosphoserine mark. Residues 178–182 carry the Nuclear localization signal motif; that stretch reads QQKKK. A compositionally biased stretch (polar residues) spans 186–198; that stretch reads CRPSMSISNQHLS. The DEUBAD domain maps to 229–338; sequence PDSILVNTNL…FENYYGQSSG (110 aa). The short motif at 258–262 is the LXXLL motif element; the sequence is LLLLL. 2 disordered regions span residues 340–487 and 516–535; these read SLED…AGLQ and QESLKRKSSLTDEEATSSWE. Over residues 398–412 the composition is skewed to basic and acidic residues; it reads QKEENQDEARPDSKS. Residues serine 477, serine 524, serine 553, and serine 590 each carry the phosphoserine modification. Arginine 594 is modified (asymmetric dimethylarginine). Serine 601 carries the post-translational modification Phosphoserine. Gly residues predominate over residues 643 to 652; sequence IPGPGPGGGQ. Disordered stretches follow at residues 643-734, 805-891, and 1103-1175; these read IPGP…LASS, PKAG…SSIP, and GHAD…VSEQ. Polar residues-rich tracts occupy residues 719-734 and 830-839; these read AQLQQTSSVPTGLASS and MTSSPVTTAS. Residues 849–870 are compositionally biased toward low complexity; that stretch reads SGTATSTGSAPSSSTLPAASSL. A compositionally biased stretch (polar residues) spans 871 to 891; sequence KTPGTSANMNGPISRTSSSIP. Over residues 1119–1131 the composition is skewed to acidic residues; it reads DESDEDRVGDEQE. Phosphoserine is present on residues serine 1121 and serine 1254. The PHD-type; atypical zinc-finger motif lies at 1332-1369; it reads PSKCYCRLKAMIMCKGCGAFCHDDCIGPSKLCVSCLVV.

Belongs to the Asx family. In terms of assembly, core component of the polycomb repressive deubiquitinase (PR-DUB) complex, at least composed of BAP1, one of ASXL1, ASXL2 or (probably) ASXL3, and one of MBD5 or MBD6. Distinct combinations of ASXL and MBD proteins may preferentially bind specific histone modification marks. The PR-DUB core associates with a number of accessory proteins, including FOXK1, FOXK2, KDM1B, HCFC1 and OGT; KDM1B specifically associates with ASXL2 PR-DUB complexes. Interacts (via PHD domain) with MBD5 and MBD6 (via MBD domain); the interaction is probably direct and mediates association of MBD proteins with the PR-DUB core. Interacts with PPARA and PPARG.

The protein resides in the nucleus. Functionally, putative Polycomb group (PcG) protein. PcG proteins act by forming multiprotein complexes, which are required to maintain the transcriptionally repressive state of homeotic genes throughout development. PcG proteins are not required to initiate repression, but to maintain it during later stages of development. They probably act via methylation of histones, rendering chromatin heritably changed in its expressibility. Involved in transcriptional regulation mediated by ligand-bound nuclear hormone receptors, such as peroxisome proliferator-activated receptor gamma (PPARG). Acts as a coactivator for PPARG and enhances its adipocyte differentiation-inducing activity; the function seems to involve differential recruitment of acetylated and methylated histone H3. Non-catalytic component of the PR-DUB complex, a complex that specifically mediates deubiquitination of histone H2A monoubiquitinated at 'Lys-119' (H2AK119ub1). The PR-DUB complex is an epigenetic regulator of gene expression and acts as a transcriptional coactivator, affecting genes involved in development, cell communication, signaling, cell proliferation and cell viability. ASXL1, ASXL2 and ASXL3 function redundantly in the PR-DUB complex. The ASXL proteins are essential for chromatin recruitment and transcriptional activation of associated genes. ASXL1 and ASXL2 are important for BAP1 protein stability. This chain is Putative Polycomb group protein ASXL2 (Asxl2), found in Mus musculus (Mouse).